A 254-amino-acid polypeptide reads, in one-letter code: RSRALILGVLALTTMLSLCGGEDDIEADHVAFYGISVYQSPGDIGQYTFEFDGDELFYVDLDKKETVWMLPEFGQLTSFDPQGGLQEIATGKYNLEILIKDSNFTPAANEAPQATVFPKSPVLLGQPNTLICFVDNIFPPVINITWLRNSKSVTDGVYETSFLVNRDHSFHKLSYLTFIPSDDDIYDCKVEHWGLEEPVLKHWEPEIPAPMSELTETVVCALGLSVGLVGIVVGTIFIIQGLRSGGTSRHPGPL.

The first 24 residues, 1–24, serve as a signal peptide directing secretion; that stretch reads RSRALILGVLALTTMLSLCGGEDD. The tract at residues 25–109 is alpha-1; it reads IEADHVAFYG…KDSNFTPAAN (85 aa). The Extracellular segment spans residues 25–216; the sequence is IEADHVAFYG…IPAPMSELTE (192 aa). N-linked (GlcNAc...) asparagine glycans are attached at residues N103 and N143. An alpha-2 region spans residues 110–203; it reads EAPQATVFPK…GLEEPVLKHW (94 aa). In terms of domain architecture, Ig-like C1-type spans 112–204; sequence PQATVFPKSP…LEEPVLKHWE (93 aa). A disulfide bridge links C132 with C188. Positions 204–216 are connecting peptide; the sequence is EPEIPAPMSELTE. A helical transmembrane segment spans residues 217-242; that stretch reads TVVCALGLSVGLVGIVVGTIFIIQGL. Topologically, residues 243–254 are cytoplasmic; it reads RSGGTSRHPGPL.

This sequence belongs to the MHC class II family.

It is found in the membrane. The protein is H-2 class II histocompatibility antigen, I-E alpha chain of Mus musculus (Mouse).